A 570-amino-acid polypeptide reads, in one-letter code: High-affinity hexose transporter HXT6 (570 aa).

At 1–60 (MSQDAAIAEQTPVEHLSAVDSASHSVLSTPSNKAERDEIKAYGEGEEHEPVVEIPKRPAS) the chain is on the cytoplasmic side. A helical transmembrane segment spans residues 61–81 (AYVTVSIMCIMIAFGGFVFGW). Residues 82–116 (DTGTISGFINQTDFIRRFGMKHKDGTNYLSKVRTG) lie on the Extracellular side of the membrane. An N-linked (GlcNAc...) asparagine glycan is attached at Asn91. A helical membrane pass occupies residues 117-137 (LIVSIFNIGCAIGGIILSKLG). Topologically, residues 138-143 (DMYGRK) are cytoplasmic. The helical transmembrane segment at 144-164 (VGLIVVVVIYIIGIIIQIASI) threads the bilayer. Topologically, residues 165–174 (NKWYQYFIGR) are extracellular. A helical membrane pass occupies residues 175–195 (IISGLGVGGIAVLSPMLISEV). The Cytoplasmic segment spans residues 196-201 (SPKHLR). Residues 202-222 (GTLVSCYQLMITAGIFLGYCT) form a helical membrane-spanning segment. The Extracellular segment spans residues 223 to 236 (NFGTKNYSNSVQWR). The N-linked (GlcNAc...) asparagine glycan is linked to Asn228. A helical membrane pass occupies residues 237–257 (VPLGLCFAWALFMIGGMTFVP). Residues 258–340 (ESPRYLAEVG…IQSLQQLTGD (83 aa)) lie on the Cytoplasmic side of the membrane. Residues 341–357 (NYFFYYGTTIFKAVGLS) form a helical membrane-spanning segment. At 358–363 (DSFETS) the chain is on the extracellular side. A helical transmembrane segment spans residues 364–381 (IVLGIVNFASTFVGIYVV). At 382-388 (ERYGRRT) the chain is on the cytoplasmic side. The helical transmembrane segment at 389-409 (CLLWGAASMTACMVVYASVGV) threads the bilayer. At 410 to 431 (TRLWPNGQDQPSSKGAGNCMIV) the chain is on the extracellular side. Residues 432–452 (FACFYIFCFATTWAPIPYVVV) traverse the membrane as a helical segment. Over 453 to 469 (SETFPLRVKSKAMSIAT) the chain is Cytoplasmic. A helical membrane pass occupies residues 470–490 (AANWLWGFLIGFFTPFITGAI). Asn491 is a topological domain (extracellular). Residues 492–512 (FYYGYVFMGCLVFMFFYVLLV) traverse the membrane as a helical segment. Topologically, residues 513-570 (VPETKGLTLEEVNTMWEEGVLPWKSASWVPPSRRGANYDAEEMAHDDKPLYKRMFSTK) are cytoplasmic. Lys560 participates in a covalent cross-link: Glycyl lysine isopeptide (Lys-Gly) (interchain with G-Cter in ubiquitin).

Belongs to the major facilitator superfamily. Sugar transporter (TC 2.A.1.1) family.

The protein localises to the membrane. Its function is as follows. High-affinity glucose transporter. The sequence is that of High-affinity hexose transporter HXT6 (HXT6) from Saccharomyces cerevisiae (strain ATCC 204508 / S288c) (Baker's yeast).